A 237-amino-acid polypeptide reads, in one-letter code: Probable transcriptional regulatory protein WS1016 (237 aa).

Belongs to the TACO1 family.

Its subcellular location is the cytoplasm. This Wolinella succinogenes (strain ATCC 29543 / DSM 1740 / CCUG 13145 / JCM 31913 / LMG 7466 / NCTC 11488 / FDC 602W) (Vibrio succinogenes) protein is Probable transcriptional regulatory protein WS1016.